The primary structure comprises 601 residues: DDB1- and CUL4-associated factor 8 (601 aa).

Polar residues-rich tracts occupy residues 1-24 (MSFSGEMSNGKTDVTNGGFSSSPE) and 46-60 (VSLSLTADETGTTQA). The interval 1–150 (MSFSGEMSNG…DWLISEKTPL (150 aa)) is disordered. Positions 39 to 50 (IEVEASDVSLSL) match the Nuclear export signal motif. The segment covering 61-99 (ESRDSCSETSGEDKDSDSMDDTGHYSINDENRGNDQSHS) has biased composition (basic and acidic residues). Residues 94-131 (NDQSHSEDEEEEEEEDEEEEAVRHRKRAQRKRANRDQE) are a coiled coil. A compositionally biased stretch (acidic residues) spans 100–113 (EDEEEEEEEDEEEE). The segment covering 116–126 (RHRKRAQRKRA) has biased composition (basic residues). Residues 127–140 (NRDQESSDEERALD) are compositionally biased toward basic and acidic residues. WD repeat units follow at residues 194 to 233 (GHSGCVNTLHFNQRGTCLASGSDDLKVVVWDWVRRKPVLE), 237 to 278 (GHKS…CCKN), 284 to 324 (QHKG…PASR), 332 to 372 (ESKV…ENVN), 388 to 427 (EAKANITCLVYSHDGSELLASYNDEDIYLFNSSHSDGAEY), 435 to 475 (RNNA…IVQF), and 479 to 519 (DKGG…TELD). Residues 561-601 (RRRRRDAGLGAGDAESDDSPSSSDSSDDDEDGPDRVQCIPS) form a disordered region.

Belongs to the WD repeat DCAF8 family.

The protein resides in the nucleus. Its subcellular location is the cytoplasm. The protein is DDB1- and CUL4-associated factor 8 (dcaf8) of Xenopus laevis (African clawed frog).